We begin with the raw amino-acid sequence, 554 residues long: Glutamine--tRNA ligase (554 aa).

The short motif at 34–44 (PEPNGYLHIGH) is the 'HIGH' region element. Residues 35-37 (EPN) and 41-47 (HIGHAKS) contribute to the ATP site. Positions 67 and 212 each coordinate L-glutamine. ATP-binding positions include T231, 261-262 (RL), and 269-271 (MSK). Positions 268 to 272 (VMSKR) match the 'KMSKS' region motif. The segment at 317-324 (TKQDNTIE) is interaction with tRNA.

Belongs to the class-I aminoacyl-tRNA synthetase family. As to quaternary structure, monomer.

The protein resides in the cytoplasm. The enzyme catalyses tRNA(Gln) + L-glutamine + ATP = L-glutaminyl-tRNA(Gln) + AMP + diphosphate. This chain is Glutamine--tRNA ligase, found in Escherichia coli (strain 55989 / EAEC).